Here is a 90-residue protein sequence, read N- to C-terminus: Antitoxin epsilon 2 (90 aa).

It belongs to the epsilon antitoxin family. As to quaternary structure, in the presence of the zeta toxin, forms an inactive PezA(2)PezT(2) heterotetramer.

Antitoxin component of a type II toxin-antitoxin (TA) system. Neutralizes the toxic effect of zeta toxin. Part of a postsegregational killing (PSK) system involved in the killing of plasmid-free cells. Continuous synthesis of the epsilon antitoxin is required to counteract the zeta toxin. In Enterococcus faecalis (Streptococcus faecalis), this protein is Antitoxin epsilon 2.